The sequence spans 198 residues: uncharacterized protein (198 aa).

The segment at 1–23 is disordered; it reads MYFGKTRQSDQSGRVPPNQNVTT. Polar residues predominate over residues 9 to 23; sequence SDQSGRVPPNQNVTT. Mo-molybdopterin contacts are provided by C75, H144, and R149.

The cofactor is Mo-molybdopterin.

This is an uncharacterized protein from Bacillus subtilis (strain 168).